The sequence spans 356 residues: MYSGRSGAPPPAHSPYPNSYNHGPPGHSAGHNVPPPPPTQPVQFGHGAPQGYSFQYSNCTGKRKALLIGINYFGQRGQLRGCINDVKNMSTYLNQNFGYAREDMVILTDDQQNPMSQPTKANILRAMHWLVKDARPNDSLFFHYSGHGGQTKDLDGDEEDGNDEVIYPVDFRSAGHIVDDEMHRIMVKSLLPGVRLTAIFDSCHSGSALDLPYIYSTQGILKEPNLAKEAGQGLLSVVSAYARGDVSGMLSTVGGLIKKATSGDASHSKARQTKTSPADVIMWSGSKDNQTSQDATIAGEATGAMSWAFITALKKNPQQSYVQLLRSIRDELATKYSQKPQLSCSHPLNTDLLYVM.

Positions 1 to 47 are disordered; that stretch reads MYSGRSGAPPPAHSPYPNSYNHGPPGHSAGHNVPPPPPTQPVQFGHG. Residues histidine 147 and cysteine 203 contribute to the active site.

This sequence belongs to the peptidase C14B family.

Functionally, involved in cell death (apoptosis). The sequence is that of Metacaspase-1 (MCA1) from Ajellomyces capsulatus (strain NAm1 / WU24) (Darling's disease fungus).